Reading from the N-terminus, the 299-residue chain is Probable endonuclease 4 (299 aa).

Positions 69, 110, 145, 179, 182, 214, 227, 229, and 259 each coordinate Zn(2+).

This sequence belongs to the AP endonuclease 2 family. Zn(2+) is required as a cofactor.

It catalyses the reaction Endonucleolytic cleavage to 5'-phosphooligonucleotide end-products.. Endonuclease IV plays a role in DNA repair. It cleaves phosphodiester bonds at apurinic or apyrimidinic (AP) sites, generating a 3'-hydroxyl group and a 5'-terminal sugar phosphate. In Geobacillus kaustophilus (strain HTA426), this protein is Probable endonuclease 4.